The sequence spans 798 residues: Penicillin-binding protein 1A (798 aa).

Residues 1 to 9 are Cytoplasmic-facing; that stretch reads MIKKIVTTC. Residues 10–30 form a helical; Signal-anchor for type II membrane protein membrane-spanning segment; the sequence is FGLVLGLCVFGVGLVAIAILV. Residues 31–798 are Periplasmic-facing; sequence TYPKLPSLDS…SKQPQLDSLF (768 aa). The interval 50 to 218 is transglycosylase; that stretch reads LTIYSADGEV…SAYNPIVNPE (169 aa). Catalysis depends on Glu88, which acts as the Proton donor; for transglycosylase activity. A transpeptidase region spans residues 414–700; the sequence is VVVQEPLLQA…GTIAVPVWVD (287 aa). The Acyl-ester intermediate; for transpeptidase activity role is filled by Ser461. The disordered stretch occupies residues 751–798; sequence SRRIREDKEAGAEDVERGAADEVRQEVQETPVLPSNTGSKQPQLDSLF. Positions 753–777 are enriched in basic and acidic residues; sequence RIREDKEAGAEDVERGAADEVRQEV. Polar residues predominate over residues 783–798; the sequence is LPSNTGSKQPQLDSLF.

It in the N-terminal section; belongs to the glycosyltransferase 51 family. The protein in the C-terminal section; belongs to the transpeptidase family.

Its subcellular location is the cell inner membrane. The catalysed reaction is [GlcNAc-(1-&gt;4)-Mur2Ac(oyl-L-Ala-gamma-D-Glu-L-Lys-D-Ala-D-Ala)](n)-di-trans,octa-cis-undecaprenyl diphosphate + beta-D-GlcNAc-(1-&gt;4)-Mur2Ac(oyl-L-Ala-gamma-D-Glu-L-Lys-D-Ala-D-Ala)-di-trans,octa-cis-undecaprenyl diphosphate = [GlcNAc-(1-&gt;4)-Mur2Ac(oyl-L-Ala-gamma-D-Glu-L-Lys-D-Ala-D-Ala)](n+1)-di-trans,octa-cis-undecaprenyl diphosphate + di-trans,octa-cis-undecaprenyl diphosphate + H(+). It carries out the reaction Preferential cleavage: (Ac)2-L-Lys-D-Ala-|-D-Ala. Also transpeptidation of peptidyl-alanyl moieties that are N-acyl substituents of D-alanine.. The protein operates within cell wall biogenesis; peptidoglycan biosynthesis. Cell wall formation. Synthesis of cross-linked peptidoglycan from the lipid intermediates. The enzyme has a penicillin-insensitive transglycosylase N-terminal domain (formation of linear glycan strands) and a penicillin-sensitive transpeptidase C-terminal domain (cross-linking of the peptide subunits). The sequence is that of Penicillin-binding protein 1A (mrcA) from Neisseria cinerea.